Consider the following 191-residue polypeptide: Gamma-glutamylaminecyclotransferase B (191 aa).

Residue 7–10 coordinates substrate; the sequence is YGTL. The Proton acceptor role is filled by Glu-82. Polar residues predominate over residues 155–178; it reads SADFSQNSEQEIKKNNSLQILTST. The interval 155 to 191 is disordered; it reads SADFSQNSEQEIKKNNSLQILTSTGDDHDVNFRGPLQ.

Belongs to the gamma-glutamylcyclotransferase family.

It catalyses the reaction epsilon-(gamma-L-glutamyl)-L-lysine = 5-oxo-L-proline + L-lysine. May contribute to degradation of proteins cross-linked by transglutaminases by degrading the cross-link between a lysine and a glutamic acid residue. Catalyzes the formation of 5-oxo-L-proline from L-gamma-glutamyl-L-epsilon-lysine. The chain is Gamma-glutamylaminecyclotransferase B (ggact.2) from Danio rerio (Zebrafish).